We begin with the raw amino-acid sequence, 121 residues long: Phosphoribosyl-AMP cyclohydrolase (121 aa).

A Mg(2+)-binding site is contributed by aspartate 76. Cysteine 77 lines the Zn(2+) pocket. Mg(2+) is bound by residues aspartate 78 and aspartate 80. Residues cysteine 93 and cysteine 100 each coordinate Zn(2+).

This sequence belongs to the PRA-CH family. As to quaternary structure, homodimer. It depends on Mg(2+) as a cofactor. The cofactor is Zn(2+).

It localises to the cytoplasm. The enzyme catalyses 1-(5-phospho-beta-D-ribosyl)-5'-AMP + H2O = 1-(5-phospho-beta-D-ribosyl)-5-[(5-phospho-beta-D-ribosylamino)methylideneamino]imidazole-4-carboxamide. It functions in the pathway amino-acid biosynthesis; L-histidine biosynthesis; L-histidine from 5-phospho-alpha-D-ribose 1-diphosphate: step 3/9. Its function is as follows. Catalyzes the hydrolysis of the adenine ring of phosphoribosyl-AMP. This Methanococcoides burtonii (strain DSM 6242 / NBRC 107633 / OCM 468 / ACE-M) protein is Phosphoribosyl-AMP cyclohydrolase.